The sequence spans 201 residues: NADH-quinone oxidoreductase subunit C (201 aa).

This sequence belongs to the complex I 30 kDa subunit family. As to quaternary structure, NDH-1 is composed of 14 different subunits. Subunits NuoB, C, D, E, F, and G constitute the peripheral sector of the complex.

It localises to the cell inner membrane. The catalysed reaction is a quinone + NADH + 5 H(+)(in) = a quinol + NAD(+) + 4 H(+)(out). In terms of biological role, NDH-1 shuttles electrons from NADH, via FMN and iron-sulfur (Fe-S) centers, to quinones in the respiratory chain. The immediate electron acceptor for the enzyme in this species is believed to be ubiquinone. Couples the redox reaction to proton translocation (for every two electrons transferred, four hydrogen ions are translocated across the cytoplasmic membrane), and thus conserves the redox energy in a proton gradient. The chain is NADH-quinone oxidoreductase subunit C from Sinorhizobium medicae (strain WSM419) (Ensifer medicae).